A 1423-amino-acid polypeptide reads, in one-letter code: MLPRTASATRTPHLNRLVSAGSRRVLPRCSSSLGIRGSLAATPRLLSTITTQQPSPLKRQPAPRATVGFERHLATVLDEPAQTATTPLYELRSFSPQAPLTVRDHTKVYAKQRVNYHGIPGDVNEMFLVFEACLQVGRLERAAQVLKRLANLDVVPPADYLDLFNQYLDAKVSQLLQEPDVDKADDIHKAFETMVSDGRELPVGGETVALLLKASLTSTDPETMQRYVTRYLSLLPTQIALETVFNTEILTYEELTKVAELCPKYNMPDNVDPDTFAQQQQQQQQQQQQQQEQQQQQDTSIDQSEVSIEPLLTSSEPSAIPEVLGTPQKGFGLQFVKRTVSMFKDIPDGFDISTLPMSQQREIQSKLEKDCVDASLARWREENESLQKMGLNTSLDTPSLNSRLYQWQKDLETRLRTMLVEVEKSEMVSKKNKDDLDRCIYGPFIRQSNPERLAAVTIISTLSSLAMGGAHKGSTIASLITHIAKFAEEDIRVQKAEALISKRNLRKAKSKQHNPRSVLRFKNSTASAGSSDMADSNNVAVEMDDEAWTTTIRTKVGAALLSALLDTAKITLVREDPVTKTLITQNQPAFSHVMQLRKGKKIGTIIPNKAVVELLVREPVPDFLARHLPMVTPPDPWVSFEKGAYLETKTPVLRLKNGEREQRLYTEAAIARGDMDQVFKGLDVLGKTGWKINSPVFKVMLDVWNSGKQVANIPPLDPIFDLPPEPASTEDPTVKRAWLKEIKVIENERSGLHSQRCFMNFQLEIARAYRDQTFYFPHNVDFRGRAYPIPPYLNHMGADHVRGLMLFAKGKPLGESGLRWLKVHLANVYGFDKASLQERQDFADENIENIRDSVNNPLNGNQWWLQAEDPWQCLATCFELAAALELEDPTKYVSHLPIHQDGTCNGLQHYAALGGDTWGAQQVNLVPGDRPADVYSAVAKLVIKGIEDDLAKDNEFAKAMHGKITRKVVKQTVMTNVYGVTYVGARKQVLKQIEAAYPNITAESGIEAALLASYVTQHIFRAMSTMFKGAHDIQNWLGEIGGRVCRALTPEQLDEFERSERSPHGDGTASGENITLAGNPRKSSAHKNDEILNNFQSTIIWTTPLRMPVVQPYRKHGTKTVSTCMQDLVMTIPERSDPVNRRKQLQAFPPNFIHSLDASHMILSALHCDELGLTFAAVHDSFWTHASDIDSMNAVLRDAFIRIHSEDVIGRLAAEFQARYKNSLYLAKIETGTKVAQEIQRWRVRNKLGPRKELLLEKERQELLRSSNPEDVERGKKMISPASLYELYSSAEDLTVPEDLKEVTIGNLAGVEETKVRRGREMDEEGEVDGSEEAVEHEDGMHEDEMLADEPRDMDGNSGLDELSELRNTNHFALSQKRAKASIASGGKQKHYLDIWLPLVFPPIPEKGDFDVRSLKDSTYFFS.

Residues 1–73 (MLPRTASATR…RATVGFERHL (73 aa)) constitute a mitochondrion transit peptide. The disordered stretch occupies residues 266 to 303 (NMPDNVDPDTFAQQQQQQQQQQQQQQEQQQQQDTSIDQ). Residues 278-297 (QQQQQQQQQQQQQQEQQQQQ) are compositionally biased toward low complexity. Catalysis depends on residues aspartate 901 and lysine 970. The span at 1055–1064 (EFERSERSPH) shows a compositional bias: basic and acidic residues. Positions 1055-1087 (EFERSERSPHGDGTASGENITLAGNPRKSSAHK) are disordered. Aspartate 1180 is an active-site residue. The segment at 1316–1342 (VRRGREMDEEGEVDGSEEAVEHEDGMH) is disordered. A compositionally biased stretch (acidic residues) spans 1322-1336 (MDEEGEVDGSEEAVE).

This sequence belongs to the phage and mitochondrial RNA polymerase family.

The protein resides in the mitochondrion. It catalyses the reaction RNA(n) + a ribonucleoside 5'-triphosphate = RNA(n+1) + diphosphate. DNA-dependent RNA polymerase catalyzes the transcription of DNA into RNA using the four ribonucleoside triphosphates as substrates. The polypeptide is DNA-directed RNA polymerase, mitochondrial (cyt-5) (Neurospora crassa (strain ATCC 24698 / 74-OR23-1A / CBS 708.71 / DSM 1257 / FGSC 987)).